Consider the following 367-residue polypeptide: Anthranilate phosphoribosyltransferase (367 aa).

5-phospho-alpha-D-ribose 1-diphosphate-binding positions include Gly105, Gly108 to Asp109, Thr113, Asn115 to Thr118, Lys133 to Ser141, and Gly145. Position 105 (Gly105) interacts with anthranilate. Ser117 provides a ligand contact to Mg(2+). Asn136 lines the anthranilate pocket. Position 191 (Arg191) interacts with anthranilate. The Mg(2+) site is built by Asp249 and Glu250.

Belongs to the anthranilate phosphoribosyltransferase family. Homodimer. It depends on Mg(2+) as a cofactor.

It carries out the reaction N-(5-phospho-beta-D-ribosyl)anthranilate + diphosphate = 5-phospho-alpha-D-ribose 1-diphosphate + anthranilate. The protein operates within amino-acid biosynthesis; L-tryptophan biosynthesis; L-tryptophan from chorismate: step 2/5. Its function is as follows. Catalyzes the transfer of the phosphoribosyl group of 5-phosphorylribose-1-pyrophosphate (PRPP) to anthranilate to yield N-(5'-phosphoribosyl)-anthranilate (PRA). The polypeptide is Anthranilate phosphoribosyltransferase (Corynebacterium jeikeium (strain K411)).